The following is a 674-amino-acid chain: DNA ligase (674 aa).

NAD(+)-binding positions include 34-38 (DAEYD), 84-85 (SL), and E116. Residue K118 is the N6-AMP-lysine intermediate of the active site. 4 residues coordinate NAD(+): R139, E174, K291, and K315. Residues C409, C412, C425, and C430 each contribute to the Zn(2+) site. The BRCT domain occupies 586 to 674 (REGEALKGLT…TGKDPRALTA (89 aa)).

Belongs to the NAD-dependent DNA ligase family. LigA subfamily. Mg(2+) is required as a cofactor. Mn(2+) serves as cofactor.

The catalysed reaction is NAD(+) + (deoxyribonucleotide)n-3'-hydroxyl + 5'-phospho-(deoxyribonucleotide)m = (deoxyribonucleotide)n+m + AMP + beta-nicotinamide D-nucleotide.. Functionally, DNA ligase that catalyzes the formation of phosphodiester linkages between 5'-phosphoryl and 3'-hydroxyl groups in double-stranded DNA using NAD as a coenzyme and as the energy source for the reaction. It is essential for DNA replication and repair of damaged DNA. The chain is DNA ligase from Thermus sp. (strain AK16D).